The chain runs to 367 residues: Glutamate 5-kinase (367 aa).

Residue K10 coordinates ATP. 3 residues coordinate substrate: S50, D137, and N149. ATP-binding positions include 169 to 170 (TD) and 211 to 217 (TGGMSTK). Residues 275-353 (AGEITVDEGA…QQIDAILGYE (79 aa)) form the PUA domain.

Belongs to the glutamate 5-kinase family.

It localises to the cytoplasm. It catalyses the reaction L-glutamate + ATP = L-glutamyl 5-phosphate + ADP. It participates in amino-acid biosynthesis; L-proline biosynthesis; L-glutamate 5-semialdehyde from L-glutamate: step 1/2. In terms of biological role, catalyzes the transfer of a phosphate group to glutamate to form L-glutamate 5-phosphate. This is Glutamate 5-kinase from Salmonella arizonae (strain ATCC BAA-731 / CDC346-86 / RSK2980).